The sequence spans 93 residues: Small ribosomal subunit protein uS19 (93 aa).

The protein belongs to the universal ribosomal protein uS19 family.

Protein S19 forms a complex with S13 that binds strongly to the 16S ribosomal RNA. This Rubrobacter xylanophilus (strain DSM 9941 / JCM 11954 / NBRC 16129 / PRD-1) protein is Small ribosomal subunit protein uS19.